The chain runs to 398 residues: Acetate kinase (398 aa).

Residue Asn8 participates in Mg(2+) binding. Lys15 is a binding site for ATP. Position 89 (Arg89) interacts with substrate. Asp146 serves as the catalytic Proton donor/acceptor. ATP-binding positions include 206–210 (HIGNG), 283–285 (DMR), and 331–335 (GMGEN). Position 383 (Glu383) interacts with Mg(2+).

This sequence belongs to the acetokinase family. Homodimer. It depends on Mg(2+) as a cofactor. Requires Mn(2+) as cofactor.

It is found in the cytoplasm. It carries out the reaction acetate + ATP = acetyl phosphate + ADP. It participates in metabolic intermediate biosynthesis; acetyl-CoA biosynthesis; acetyl-CoA from acetate: step 1/2. Catalyzes the formation of acetyl phosphate from acetate and ATP. Can also catalyze the reverse reaction. The chain is Acetate kinase from Streptococcus pyogenes serotype M6 (strain ATCC BAA-946 / MGAS10394).